The following is a 338-amino-acid chain: Methionine synthase (338 aa).

Residues His211, Cys213, and Cys294 each coordinate Zn(2+).

Belongs to the archaeal MetE family. Requires Zn(2+) as cofactor.

It functions in the pathway amino-acid biosynthesis; L-methionine biosynthesis via de novo pathway. Functionally, catalyzes the transfer of a methyl group to L-homocysteine resulting in methionine formation. The physiological methyl donor is unknown. In Sulfurisphaera tokodaii (strain DSM 16993 / JCM 10545 / NBRC 100140 / 7) (Sulfolobus tokodaii), this protein is Methionine synthase.